The sequence spans 385 residues: Exopolygalacturonase rpg16 (385 aa).

An N-terminal signal peptide occupies residues 1 to 26 (MVRFTSFTSPFSAILLLSFGINKVAT). Asn143, Asn161, Asn164, and Asn180 each carry an N-linked (GlcNAc...) asparagine glycan. A PbH1 1 repeat occupies 165 to 195 (STNLLLHDFIIHTVSNNSNPAKNTDALDLYH). The Proton donor role is filled by Asp210. Residues Cys212 and Cys229 are joined by a disulfide bond. Asn218 and Asn226 each carry an N-linked (GlcNAc...) asparagine glycan. PbH1 repeat units follow at residues 219-241 (VTKVTVSNITCRGGHGYSIGSLG), 249-270 (VTQVNVYNSTCIDCQNGVRVKT), and 278-299 (VEDINFTDIYLEKAENPIIITT). His233 is an active-site residue. 3 N-linked (GlcNAc...) asparagine glycosylation sites follow: Asn256, Asn282, and Asn343. Cys344 and Cys350 are oxidised to a cystine. A PbH1 5 repeat occupies 350 to 376 (CSDVTLTNINISKASNNTKNVCVNLKG). Residues Asn359 and Asn365 are each glycosylated (N-linked (GlcNAc...) asparagine).

It belongs to the glycosyl hydrolase 28 family. Post-translationally, N-glycosylated.

Its subcellular location is the secreted. The catalysed reaction is [(1-&gt;4)-alpha-D-galacturonosyl](n) + H2O = alpha-D-galacturonate + [(1-&gt;4)-alpha-D-galacturonosyl](n-1). Functionally, specific in hydrolyzing the terminal glycosidic bond of polygalacturonic acid and oligogalacturonates. In Rhizopus delemar (strain RA 99-880 / ATCC MYA-4621 / FGSC 9543 / NRRL 43880) (Mucormycosis agent), this protein is Exopolygalacturonase rpg16.